Consider the following 797-residue polypeptide: MYLETRRAIFVFWIFLQVQGTKDISINIYHSETKDIDNPPRNETTESTEKMYKMSTMRRIFDLAKHRTKRSAFFPTGVKVCPQESMKQILDSLQAYYRLRVCQEAVWEAYRIFLDRIPDTGEYQDWVSICQQETFCLFDIGKNFSNSQEHLDLLQQRIKQRSFPDRKDEISAEKTLGEPGETIVISTDVANVSLGPFPLTPDDTLLNEILDNTLNDTKMPTTERETEFAVLEEQRVELSVSLVNQKFKAELADSQSPYYQELAGKSQLQMQKIFKKLPGFKKIHVLGFRPKKEKDGSSSTEMQLTAIFKRHSAEAKSPASDLLSFDSNKIESEEVYHGTMEEDKQPEIYLTATDLKRLISKALEEEQSLDVGTIQFTDEIAGSLPAFGPDTQSELPTSFAVITEDATLSPELPPVEPQLETVDGAEHGLPDTSWSPPAMASTSLSEAPPFFMASSIFSLTDQGTTDTMATDQTMLVPGLTIPTSDYSAISQLALGISHPPASSDDSRSSAGGEDMVRHLDEMDLSDTPAPSEVPELSEYVSVPDHFLEDTTPVSALQYITTSSMTIAPKGRELVVFFSLRVANMAFSNDLFNKSSLEYRALEQQFTQLLVPYLRSNLTGFKQLEILNFRNGSVIVNSKMKFAKSVPYNLTKAVHGVLEDFRSAAAQQLHLEIDSYSLNIEPADQADPCKFLACGEFAQCVKNERTEEAECRCKPGYDSQGSLDGLEPGLCGPGTKECEVLQGKGAPCRLPDHSENQAYKTSVKKFQNQQNNKVISKRNSELLTVEYEEFNHQDWEGN.

An N-terminal signal peptide occupies residues 1 to 20; it reads MYLETRRAIFVFWIFLQVQG. 4 N-linked (GlcNAc...) asparagine glycosylation sites follow: Asn42, Asn143, Asn191, and Asn215. The SEA 1 domain occupies 232–354; that stretch reads EEQRVELSVS…QPEIYLTATD (123 aa). 4 O-linked (GalNAc...) threonine glycosylation sites follow: Thr403, Thr421, Thr432, and Thr442. Positions 571–684 constitute an SEA 2 domain; it reads RELVVFFSLR…YSLNIEPADQ (114 aa). 2 N-linked (GlcNAc...) asparagine glycosylation sites follow: Asn592 and Asn616. The short motif at 621–629 is the Heparin- and hyaluronan-binding element; it reads KQLEILNFR. Asn630 and Asn648 each carry an N-linked (GlcNAc...) asparagine glycan.

In terms of processing, the N-terminus is blocked. Highly glycosylated (N- and O-linked carbohydrates and sialic acid). As to expression, expressed in the retina (at protein level). In the retina, specifically expressed by cone and rod photoreceptor cells. Localizes to cone and rod photoreceptor cells surrounding the interphotoreceptor matrix of the retina.

The protein localises to the cell projection. Its subcellular location is the cilium. It is found in the photoreceptor outer segment. The protein resides in the secreted. It localises to the extracellular space. The protein localises to the extracellular matrix. Its subcellular location is the interphotoreceptor matrix. It is found in the photoreceptor inner segment. In terms of biological role, chondroitin sulfate-, heparin- and hyaluronan-binding protein. May serve to form a basic macromolecular scaffold comprising the insoluble interphotoreceptor matrix. In Homo sapiens (Human), this protein is Interphotoreceptor matrix proteoglycan 1.